A 99-amino-acid polypeptide reads, in one-letter code: Large ribosomal subunit protein bL21 (99 aa).

It belongs to the bacterial ribosomal protein bL21 family. As to quaternary structure, part of the 50S ribosomal subunit. Contacts protein L20.

Its function is as follows. This protein binds to 23S rRNA in the presence of protein L20. The protein is Large ribosomal subunit protein bL21 of Mesomycoplasma hyopneumoniae (strain 232) (Mycoplasma hyopneumoniae).